The primary structure comprises 428 residues: Transcription factor bHLH91 (428 aa).

A bHLH domain is found at 210-259; that stretch reads KRKNKPFTTERERRCHLNERYEALKLLIPSPSKGDRASILQDGIDYINEL. The interval 278 to 320 is disordered; that stretch reads RHKNNEVDDNNNNKNLDDHGNEDDDDDDENMEKKPESDVIDQC. The span at 297–307 shows a compositional bias: acidic residues; sequence GNEDDDDDDEN.

In terms of assembly, homodimer. Flowers.

Its subcellular location is the nucleus. The protein is Transcription factor bHLH91 (BHLH91) of Arabidopsis thaliana (Mouse-ear cress).